A 452-amino-acid chain; its full sequence is Glucose-6-phosphate isomerase (452 aa).

The Proton donor role is filled by Glu290. Catalysis depends on residues His311 and Lys425.

This sequence belongs to the GPI family.

The protein localises to the cytoplasm. It catalyses the reaction alpha-D-glucose 6-phosphate = beta-D-fructose 6-phosphate. The protein operates within carbohydrate biosynthesis; gluconeogenesis. It functions in the pathway carbohydrate degradation; glycolysis; D-glyceraldehyde 3-phosphate and glycerone phosphate from D-glucose: step 2/4. Its function is as follows. Catalyzes the reversible isomerization of glucose-6-phosphate to fructose-6-phosphate. This Limosilactobacillus reuteri (strain DSM 20016) (Lactobacillus reuteri) protein is Glucose-6-phosphate isomerase.